Reading from the N-terminus, the 308-residue chain is Very-long-chain enoyl-CoA reductase (308 aa).

The Cytoplasmic portion of the chain corresponds to 1-86; sequence MKHYEVEIRD…YFRDLGAQIS (86 aa). Position 22 is an N6-acetyllysine (Lys22). A Phosphoserine modification is found at Ser58. Position 60 is an N6-acetyllysine (Lys60). The chain crosses the membrane as a helical span at residues 87–106; it reads WVTVFLTEYAGPLFIYLLFY. The Lumenal segment spans residues 107 to 124; that stretch reads FRVPFIYGRKYDFTSSRH. Residues 125–147 form a helical membrane-spanning segment; the sequence is TVVHLACMCHSFHYIKRLLETLF. Residues 148 to 158 lie on the Cytoplasmic side of the membrane; the sequence is VHRFSHGTMPL. A helical transmembrane segment spans residues 159–180; it reads RNIFKNCTYYWGFAAWMAYYIN. Residues 181–189 are Lumenal-facing; it reads HPLYTPPTY. Residues 190-216 traverse the membrane as a helical segment; that stretch reads GVQQVKLALAIFVICQLGNFSIHMALR. At 217 to 245 the chain is on the cytoplasmic side; sequence DLRPAGSKTRKIPYPTKNPFTWLFLLVSC. Residues 246-262 traverse the membrane as a helical segment; it reads PNYTYEVGSWIGFAIMT. Over 263–264 the chain is Lumenal; sequence QC. A helical membrane pass occupies residues 265–292; sequence VPVALFSLVGFTQMTIWAKGKHRSYLKE. Over 293–308 the chain is Cytoplasmic; it reads FRDYPPLRMPIIPFLL.

The protein belongs to the steroid 5-alpha reductase family. As to quaternary structure, interacts with ELOVL1 and LASS2. Post-translationally, glycosylated. In terms of tissue distribution, expressed at high levels in brain and is also found at lower levels in several other tissues.

The protein localises to the endoplasmic reticulum membrane. It catalyses the reaction a very-long-chain 2,3-saturated fatty acyl-CoA + NADP(+) = a very-long-chain (2E)-enoyl-CoA + NADPH + H(+). The enzyme catalyses octadecanoyl-CoA + NADP(+) = (2E)-octadecenoyl-CoA + NADPH + H(+). It carries out the reaction (2E,7Z,10Z,13Z,16Z)-docosapentaenoyl-CoA + NADPH + H(+) = (7Z,10Z,13Z,16Z)-docosatetraenoyl-CoA + NADP(+). The catalysed reaction is (2E,7Z,10Z,13Z,16Z,19Z)-docosahexaenoyl-CoA + NADPH + H(+) = (7Z,10Z,13Z,16Z,19Z)-docosapentaenoyl-CoA + NADP(+). It catalyses the reaction (2E,8Z,11Z,14Z)-eicosatetraenoyl-CoA + NADPH + H(+) = (8Z,11Z,14Z)-eicosatrienoyl-CoA + NADP(+). The enzyme catalyses (2E)-hexadecenoyl-CoA + NADPH + H(+) = hexadecanoyl-CoA + NADP(+). It participates in lipid metabolism; fatty acid biosynthesis. The protein operates within lipid metabolism; sphingolipid metabolism. Functionally, involved in both the production of very long-chain fatty acids for sphingolipid synthesis and the degradation of the sphingosine moiety in sphingolipids through the sphingosine 1-phosphate metabolic pathway. Catalyzes the last of the four reactions of the long-chain fatty acids elongation cycle. This endoplasmic reticulum-bound enzymatic process, allows the addition of 2 carbons to the chain of long- and very long-chain fatty acids/VLCFAs per cycle. This enzyme reduces the trans-2,3-enoyl-CoA fatty acid intermediate to an acyl-CoA that can be further elongated by entering a new cycle of elongation. Thereby, it participates in the production of VLCFAs of different chain lengths that are involved in multiple biological processes as precursors of membrane lipids and lipid mediators. Catalyzes the saturation step of the sphingosine 1-phosphate metabolic pathway, the conversion of trans-2-hexadecenoyl-CoA to palmitoyl-CoA. This chain is Very-long-chain enoyl-CoA reductase (Tecr), found in Rattus norvegicus (Rat).